Here is a 56-residue protein sequence, read N- to C-terminus: uncharacterized protein (56 aa).

4Fe-4S ferredoxin-type domains are found at residues valine 2 to glutamate 28 and histidine 29 to glutamate 56. [4Fe-4S] cluster contacts are provided by cysteine 9, cysteine 12, cysteine 15, cysteine 19, cysteine 38, cysteine 41, cysteine 44, and cysteine 48.

[4Fe-4S] cluster serves as cofactor.

In terms of biological role, ferredoxins are iron-sulfur proteins that transfer electrons in a wide variety of metabolic reactions. This is an uncharacterized protein from Methanocaldococcus jannaschii (strain ATCC 43067 / DSM 2661 / JAL-1 / JCM 10045 / NBRC 100440) (Methanococcus jannaschii).